Here is a 208-residue protein sequence, read N- to C-terminus: Small ribosomal subunit protein uS4 (208 aa).

Residues 98–161 (RRLDNVVYRL…RKIPVLAEAQ (64 aa)) enclose the S4 RNA-binding domain.

It belongs to the universal ribosomal protein uS4 family. In terms of assembly, part of the 30S ribosomal subunit. Contacts protein S5. The interaction surface between S4 and S5 is involved in control of translational fidelity.

In terms of biological role, one of the primary rRNA binding proteins, it binds directly to 16S rRNA where it nucleates assembly of the body of the 30S subunit. Its function is as follows. With S5 and S12 plays an important role in translational accuracy. This chain is Small ribosomal subunit protein uS4, found in Desulfovibrio desulfuricans (strain ATCC 27774 / DSM 6949 / MB).